Reading from the N-terminus, the 227-residue chain is 2,3-bisphosphoglycerate-dependent phosphoglycerate mutase (227 aa).

Residues 7-14 (RHGFSEWN), 20-21 (TG), Arg-59, 86-89 (ERHY), Lys-97, 113-114 (RR), and 182-183 (GN) each bind substrate. His-8 functions as the Tele-phosphohistidine intermediate in the catalytic mechanism. Glu-86 (proton donor/acceptor) is an active-site residue.

The protein belongs to the phosphoglycerate mutase family. BPG-dependent PGAM subfamily. As to quaternary structure, homodimer.

It carries out the reaction (2R)-2-phosphoglycerate = (2R)-3-phosphoglycerate. Its pathway is carbohydrate degradation; glycolysis; pyruvate from D-glyceraldehyde 3-phosphate: step 3/5. Functionally, catalyzes the interconversion of 2-phosphoglycerate and 3-phosphoglycerate. This Haemophilus ducreyi (strain 35000HP / ATCC 700724) protein is 2,3-bisphosphoglycerate-dependent phosphoglycerate mutase.